The chain runs to 316 residues: CXXC-type zinc finger protein 5 (316 aa).

Gly residues predominate over residues 1 to 10 (MSSLGGGSQD). The tract at residues 1-95 (MSSLGGGSQD…SGGAGSMMGG (95 aa)) is disordered. Composition is skewed to low complexity over residues 11–27 (AGGS…SGSG) and 36–50 (SATV…VADD). The CXXC-type zinc finger occupies 250–291 (GKKKRKRCGMCAPCRRRINCEQCSSCRNRKTGHQICKFRKCE). Residues 251–256 (KKKRKR) carry the Nuclear localization signal motif. Zn(2+) is bound by residues Cys-257, Cys-260, Cys-263, Cys-269, Cys-272, Cys-275, Cys-285, and Cys-290.

In terms of assembly, interacts with DVL1. Interacts with RBPJ. As to expression, expressed in neural stem cells (at protein level). Expressed in the dorsal telencephalon.

It is found in the nucleus. The protein localises to the cytoplasm. Its function is as follows. May indirectly participate in activation of the NF-kappa-B and MAPK pathways. Required for DNA damage-induced ATM phosphorylation, p53 activation and cell cycle arrest. Involved in myelopoiesis. Acts as a mediator of BMP4-mediated modulation of canonical Wnt signaling activity in neural stem cells. Binds to the oxygen responsive element of COX4I2 and represses its transcription under hypoxia conditions (4% oxygen), as well as normoxia conditions (20% oxygen). May repress COX4I2 transactivation induced by CHCHD2 and RBPJ. Binds preferentially to DNA containing cytidine-phosphate-guanosine (CpG) dinucleotides over CpH (H=A, T, and C), hemimethylated-CpG and hemimethylated-hydroxymethyl-CpG. The polypeptide is CXXC-type zinc finger protein 5 (Cxxc5) (Rattus norvegicus (Rat)).